Reading from the N-terminus, the 511-residue chain is MTIVLRPGSVPLHHLADIYWNNGSAKLDPSFDAAVLKGAARIAEIAAGNAPVYGINTGFGKLASIKIDAADLATLQRNLILSHCCGVGAPLPENVVRLIMALKLISLGRGASGVRIELIRLIEGMLEKGVIPVIPEKGSVGASGDLAPLAHMSATMMGEGEAFYQGVQMPSKDALAKAGLSPVVLAAKEGLALINGTQTSTALALAGLFRAHRAAQSALVTGALSTDAAMGSSAPFHPDIHTLRGHKGQIDAGSALRNLLQGSEIRESHIEGDERVQDPYCIRCQPQVDGACLDLLASVARTLEIEANAVTDNPLVLSDNSVVSGGNFHAEPVAFAADQTALAVCEIGAIAQRRIALLVDPALSYGLPAFLSKKPGLNSGLMIAEVTSAALMSENKQMSHPASVDSTPTSANQEDHVSMACHGARRLLAMTDNLFGILGIEALAAVQGVELRGPLKTSPELEKAAAVLRSAVPVLEDDRYMATDLKAAIEVVASGALVSAISSGILPVLEA.

The segment at residues Ala142–Gly144 is a cross-link (5-imidazolinone (Ala-Gly)). Ser143 is subject to 2,3-didehydroalanine (Ser).

This sequence belongs to the PAL/histidase family. In terms of processing, contains an active site 4-methylidene-imidazol-5-one (MIO), which is formed autocatalytically by cyclization and dehydration of residues Ala-Ser-Gly.

It localises to the cytoplasm. The catalysed reaction is L-histidine = trans-urocanate + NH4(+). It functions in the pathway amino-acid degradation; L-histidine degradation into L-glutamate; N-formimidoyl-L-glutamate from L-histidine: step 1/3. This Rhizobium rhizogenes (Agrobacterium rhizogenes) protein is Histidine ammonia-lyase.